The following is a 230-amino-acid chain: Large ribosomal subunit protein bL25 (230 aa).

This sequence belongs to the bacterial ribosomal protein bL25 family. CTC subfamily. Part of the 50S ribosomal subunit; part of the 5S rRNA/L5/L18/L25 subcomplex. Contacts the 5S rRNA. Binds to the 5S rRNA independently of L5 and L18.

Functionally, this is one of the proteins that binds to the 5S RNA in the ribosome where it forms part of the central protuberance. In Rhodopseudomonas palustris (strain ATCC BAA-98 / CGA009), this protein is Large ribosomal subunit protein bL25 (rplY).